Here is a 185-residue protein sequence, read N- to C-terminus: Ribosome-recycling factor (185 aa).

Belongs to the RRF family.

The protein localises to the cytoplasm. Functionally, responsible for the release of ribosomes from messenger RNA at the termination of protein biosynthesis. May increase the efficiency of translation by recycling ribosomes from one round of translation to another. The polypeptide is Ribosome-recycling factor (Shewanella piezotolerans (strain WP3 / JCM 13877)).